We begin with the raw amino-acid sequence, 605 residues long: Ubiquitin carboxyl-terminal hydrolase 2 (605 aa).

Residues 1 to 200 (MSQLSSTLKR…CPEYLVDYLE (200 aa)) are necessary for interaction with MDM4. 2 disordered regions span residues 71–107 (LLDYDRGRPLLRPDITGGGKRAESQTRGTERPLGSGL) and 237–264 (WETGKGQAPGPSRSSSPGRDGMNSKSAQ). Residues 90 to 100 (KRAESQTRGTE) show a composition bias toward basic and acidic residues. Residues 245–255 (PGPSRSSSPGR) are compositionally biased toward low complexity. The USP domain occupies 267-599 (AGLRNLGNTC…DAYLLFYELA (333 aa)). The active-site Nucleophile is the cysteine 276. The segment at 403-503 (YLEREDSRIG…FPKILVLHLK (101 aa)) is necessary for interaction with MDM4. 4 residues coordinate Zn(2+): cysteine 425, cysteine 428, cysteine 476, and cysteine 479. The Proton acceptor role is filled by histidine 557.

Belongs to the peptidase C19 family. USP2 subfamily. In terms of assembly, homooligomer. Found in trimeric complex with MDM2 and MDM4 and USP2. Interacts with CCND1; the interaction is direct and promotes its stabilization by antagonizing ubiquitin-dependent degradation. Interacts (via N-terminus and C-terminus) with MDM2. Interacts with MDM4. Interacts with PER1. Interacts with KCNQ1; counteracts the NEDD4L-specific down-regulation of I(Ks) and restore plasma membrane localization of KCNQ1. Isoform 4: Interacts with NHERF4 and CLTC. In terms of tissue distribution, expressed in mesangial cells of the kidney and in different types of glomerulonephritides (at protein level).

It localises to the cytoplasm. The protein resides in the perinuclear region. It is found in the nucleus. The protein localises to the membrane. The catalysed reaction is Thiol-dependent hydrolysis of ester, thioester, amide, peptide and isopeptide bonds formed by the C-terminal Gly of ubiquitin (a 76-residue protein attached to proteins as an intracellular targeting signal).. With respect to regulation, cleavage is inhibited by ubiquitin in a dosage-dependent manner. Cleavage is blocked by ubiquitin aldehyde. Its function is as follows. Hydrolase that deubiquitinates polyubiquitinated target proteins such as MDM2, MDM4 and CCND1. Isoform 1 and isoform 4 possess both ubiquitin-specific peptidase and isopeptidase activities. Deubiquitinates MDM2 without reversing MDM2-mediated p53/TP53 ubiquitination and thus indirectly promotes p53/TP53 degradation and limits p53 activity. Has no deubiquitinase activity against p53/TP53. Prevents MDM2-mediated degradation of MDM4. Plays a role in the G1/S cell-cycle progression in normal and cancer cells. Regulates the circadian clock by modulating its intrinsic circadian rhythm and its capacity to respond to external cues. Associates with clock proteins and deubiquitinates core clock component PER1 but does not affect its overall stability. Regulates the nucleocytoplasmic shuttling and nuclear retention of PER1 and its repressive role on the clock transcription factors CLOCK and BMAL1. Plays a role in the regulation of myogenic differentiation of embryonic muscle cells. Functionally, circadian clock output effector that regulates Ca(2+) absorption in the small intestine. Probably functions by regulating protein levels of the membrane scaffold protein NHERF4 in a rhythmic manner, and is therefore likely to control Ca(2+) membrane permeability mediated by the Ca(2+) channel TRPV6 in the intestine. This is Ubiquitin carboxyl-terminal hydrolase 2 (USP2) from Homo sapiens (Human).